The chain runs to 370 residues: Chloromuconate cycloisomerase (370 aa).

Lysine 165 (proton acceptor) is an active-site residue. Aspartate 194, glutamate 220, and aspartate 245 together coordinate Mn(2+). Residue glutamate 323 is the Proton donor of the active site.

This sequence belongs to the mandelate racemase/muconate lactonizing enzyme family. Requires Mn(2+) as cofactor.

The catalysed reaction is 2-[(2R)-2-chloro-2,5-dihydro-5-oxofuryl]acetate = 3-chloro-cis,cis-muconate + H(+). It functions in the pathway aromatic compound metabolism; 3-chlorocatechol degradation. Its function is as follows. Highly active toward chlorinated substrates but retains diminished activity toward the non-chlorinated substrates. This chain is Chloromuconate cycloisomerase (clcB), found in Pseudomonas putida (Arthrobacter siderocapsulatus).